A 369-amino-acid polypeptide reads, in one-letter code: 3-isopropylmalate dehydrogenase (369 aa).

Position 77-90 (77-90 (GPKWDDLPFDKKPE)) interacts with NAD(+). 4 residues coordinate substrate: R97, R107, R135, and D226. Residues D226, D250, and D254 each contribute to the Mg(2+) site. 289–301 (GSAPDIAGKDMAN) lines the NAD(+) pocket.

Belongs to the isocitrate and isopropylmalate dehydrogenases family. LeuB type 1 subfamily. In terms of assembly, homodimer. Requires Mg(2+) as cofactor. The cofactor is Mn(2+).

The protein localises to the cytoplasm. It carries out the reaction (2R,3S)-3-isopropylmalate + NAD(+) = 4-methyl-2-oxopentanoate + CO2 + NADH. Its pathway is amino-acid biosynthesis; L-leucine biosynthesis; L-leucine from 3-methyl-2-oxobutanoate: step 3/4. Its function is as follows. Catalyzes the oxidation of 3-carboxy-2-hydroxy-4-methylpentanoate (3-isopropylmalate) to 3-carboxy-4-methyl-2-oxopentanoate. The product decarboxylates to 4-methyl-2 oxopentanoate. This chain is 3-isopropylmalate dehydrogenase, found in Paramagnetospirillum magneticum (strain ATCC 700264 / AMB-1) (Magnetospirillum magneticum).